We begin with the raw amino-acid sequence, 274 residues long: Cytochrome b-c1 complex subunit Rieske, mitochondrial (274 aa).

The Mitochondrial matrix portion of the chain corresponds to Ser79 to Ser103. Residues Arg104–Met140 form a helical membrane-spanning segment. The Mitochondrial intermembrane portion of the chain corresponds to Ser141–Gly274. The Rieske domain maps to Glu187–Ile272. [2Fe-2S] cluster-binding residues include Cys217, His219, Cys236, His239, and Ser241. A disulfide bridge connects residues Cys222 and Cys238.

The protein belongs to the Rieske iron-sulfur protein family. As to quaternary structure, component of the ubiquinol-cytochrome c oxidoreductase (cytochrome b-c1 complex, complex III, CIII), a multisubunit enzyme composed of 11 subunits. The complex is composed of 3 respiratory subunits cytochrome b, cytochrome c1 and Rieske protein UQCRFS1, 2 core protein subunits UQCRC1/QCR1 and UQCRC2/QCR2, and 6 low-molecular weight protein subunits UQCRH/QCR6, UQCRB/QCR7, UQCRQ/QCR8, UQCR10/QCR9, UQCR11/QCR10 and subunit 9, the cleavage product of Rieske protein UQCRFS1. The complex exists as an obligatory dimer and forms supercomplexes (SCs) in the inner mitochondrial membrane with NADH-ubiquinone oxidoreductase (complex I, CI) and cytochrome c oxidase (complex IV, CIV), resulting in different assemblies (supercomplex SCI(1)III(2)IV(1) and megacomplex MCI(2)III(2)IV(2)). Incorporation of the Rieske protein UQCRFS1 is the penultimate step in complex III assembly. Interacts with TTC19, which is involved in the clearance of UQCRFS1 fragments. In terms of assembly, component of the ubiquinol-cytochrome c oxidoreductase (cytochrome b-c1 complex, complex III, CIII). Subunit 9 corresponds to the mitochondrial targeting sequence (MTS) of Rieske protein UQCRFS1. It is retained after processing and incorporated inside complex III, where it remains bound to the complex and localizes between the 2 core subunits UQCRC1/QCR1 and UQCRC2/QCR2. The cofactor is [2Fe-2S] cluster. Proteolytic processing is necessary for the correct insertion of UQCRFS1 in the complex III dimer. Several fragments are generated during UQCRFS1 insertion, most probably due to the endogenous matrix-processing peptidase (MPP) activity of the 2 core protein subunits UQCRC1/QCR1 and UQCRC2/QCR2, which are homologous to the 2 mitochondrial-processing peptidase (MPP) subunits beta-MPP and alpha-MPP respectively. The action of the protease is also necessary for the clearance of the UQCRFS1 fragments.

The protein resides in the mitochondrion inner membrane. It carries out the reaction a quinol + 2 Fe(III)-[cytochrome c](out) = a quinone + 2 Fe(II)-[cytochrome c](out) + 2 H(+)(out). Component of the ubiquinol-cytochrome c oxidoreductase, a multisubunit transmembrane complex that is part of the mitochondrial electron transport chain which drives oxidative phosphorylation. The respiratory chain contains 3 multisubunit complexes succinate dehydrogenase (complex II, CII), ubiquinol-cytochrome c oxidoreductase (cytochrome b-c1 complex, complex III, CIII) and cytochrome c oxidase (complex IV, CIV), that cooperate to transfer electrons derived from NADH and succinate to molecular oxygen, creating an electrochemical gradient over the inner membrane that drives transmembrane transport and the ATP synthase. The cytochrome b-c1 complex catalyzes electron transfer from ubiquinol to cytochrome c, linking this redox reaction to translocation of protons across the mitochondrial inner membrane, with protons being carried across the membrane as hydrogens on the quinol. In the process called Q cycle, 2 protons are consumed from the matrix, 4 protons are released into the intermembrane space and 2 electrons are passed to cytochrome c. The Rieske protein is a catalytic core subunit containing a [2Fe-2S] iron-sulfur cluster. It cycles between 2 conformational states during catalysis to transfer electrons from the quinol bound in the Q(0) site in cytochrome b to cytochrome c1. Incorporation of UQCRFS1 is the penultimate step in complex III assembly. Its function is as follows. Component of the ubiquinol-cytochrome c oxidoreductase (cytochrome b-c1 complex, complex III, CIII). UQCRFS1 undergoes proteolytic processing once it is incorporated in the complex III dimer. One of the fragments, called subunit 9, corresponds to its mitochondrial targeting sequence (MTS). The proteolytic processing is necessary for the correct insertion of UQCRFS1 in the complex III dimer, but the persistence of UQCRFS1-derived fragments may prevent newly imported UQCRFS1 to be processed and assembled into complex III and is detrimental for the complex III structure and function. This is Cytochrome b-c1 complex subunit Rieske, mitochondrial (UQCRFS1) from Pan paniscus (Pygmy chimpanzee).